Here is a 136-residue protein sequence, read N- to C-terminus: Protein NrdI (136 aa).

It belongs to the NrdI family.

Functionally, probably involved in ribonucleotide reductase function. The chain is Protein NrdI from Salmonella arizonae (strain ATCC BAA-731 / CDC346-86 / RSK2980).